The primary structure comprises 941 residues: MPDHTTFAARHIGPDPQAVAAMLDVIGVGSLDELAAKAVPAGIRDRLSADGIAPGLDRLPPPASETEALAELRGLAEANTVAVSMIGQGYYDTLTPPVLLRNILENPAWYTAYTPYQPEISQGRLEALLNFQTMVADLTGLEIANASMLDEGTAAAEAMTLMHRASRGKSNRLAVDVDVFAQTAAIVATRARPLGIEIVTADLRDGLPDGDFFGVIAQLPGASGAITDWAALVAQAHERGALVALGADLLALTLITPPGEIGADVAFGTTQRFGVPMGFGGPHAGYLAVHANHARQLPGRLVGVSLDADGSPAYRLALQTREQHIRRDKATSNICTAQVLLAVMAAMYASYHGAEGLTAIARRVHGHAEAIAAALGTAVVHDRYFDTVLARVPGRAHEVIAAAKARGINLWRVDDDHVSVACDEATTDEHVAAVLEAFGVAPAEPVASEIATRTSEFLTHPAFTQYRTETAMMRYLRTLADKDIALDRSMIPLGSCTMKLNAAAEMEPITWPEFARQHPFAPASDTPGLRRLIGDLENWLVAITGYDAVSLQPNAGSQGEYAGLLAIHDYHASRGEPHRDICLIPSSAHGTNAASAALAGMRVVVVGCHDNGDVDLDDLRAKVTDHRDRLSTLMITYPSTHGVYEHDIAEICAAVHDAGGQVYVDGANLNALVGLARPGKFGGDVSHLNLHKTFCIPHGGGGPGVGPVAVRSHLAPFLPGHPHAPELPQGHPVSSAPYGSASILPISWAYIRMMGADGLRAASLTAITSANYIARRLDEYFPVLYTGENGMVAHECILDLRPITKATGVTVDDVAKRLADYGFHAPTMSFPVAGTLMVEPTESETLTEVDAFCDAMIAIRGEIDRVGAGEWPVEDNPLRGAPHTAECLVTTDWDHPYSREQAAYPLGKDFRPKVWPPVRRIDGAYGDRNLVCSCPPVEAFA.

The residue at position 692 (lysine 692) is an N6-(pyridoxal phosphate)lysine.

This sequence belongs to the GcvP family. In terms of assembly, the glycine cleavage system is composed of four proteins: P, T, L and H. Requires pyridoxal 5'-phosphate as cofactor.

It catalyses the reaction N(6)-[(R)-lipoyl]-L-lysyl-[glycine-cleavage complex H protein] + glycine + H(+) = N(6)-[(R)-S(8)-aminomethyldihydrolipoyl]-L-lysyl-[glycine-cleavage complex H protein] + CO2. Its function is as follows. The glycine cleavage system catalyzes the degradation of glycine. The P protein binds the alpha-amino group of glycine through its pyridoxal phosphate cofactor; CO(2) is released and the remaining methylamine moiety is then transferred to the lipoamide cofactor of the H protein. The protein is Glycine dehydrogenase (decarboxylating) of Mycobacterium avium (strain 104).